The primary structure comprises 837 residues: Amyloid-beta A4 precursor protein-binding family A member 1 (837 aa).

3 disordered regions span residues 1–93 (MNHL…DTAE), 238–342 (YDER…SKEK), and 358–435 (EEVK…ESRK). A compositionally biased stretch (acidic residues) spans 23-38 (ESVEADLEHPEVEEEQ). Phosphoserine occurs at positions 78, 242, 246, 248, 263, 280, and 285. Residues 226–314 (YRQEALGARL…TPAGGRPDSP (89 aa)) form a munc-18-1 binding region. A compositionally biased stretch (basic and acidic residues) spans 238 to 254 (YDERSDGESDSPEKEAE). Thr-305 is subject to Phosphothreonine. Phosphoserine occurs at positions 313 and 367. Phosphothreonine is present on Thr-370. An LIN-2/CASK binding region spans residues 373-436 (EPKEPIWVMR…ASTNKESRKS (64 aa)). Basic and acidic residues predominate over residues 387–398 (PTRDCDDQRPMD). Residues 399–418 (GDSPSPGSSSPLGAESSSTS) show a composition bias toward low complexity. Ser-401, Ser-403, Ser-408, and Ser-568 each carry phosphoserine. Positions 457–643 (DGIIFAANYL…LLNTQDMYND (187 aa)) constitute a PID domain. The tract at residues 626 to 641 (LSQKEYSDLLNTQDMY) is autoinhibitory helix linker. 2 PDZ domains span residues 656-742 (DVFI…IVRC) and 747-822 (TVLI…TMPA).

As to quaternary structure, part of a multimeric complex containing STXBP1 and STX1A. Interacts with STXBP1. Also part of the brain-specific heterotrimeric complex LIN-10/X11-alpha, LIN-2/CASK, and LIN7. Component of the brain-specific heterotrimeric complex (LIN-10-LIN-2-LIN-7 complex) composed of at least APBA1, CASK, and LIN7, which associates with the motor protein KIF17 to transport vesicles along microtubules. Within the complex, interacts (via PDZ domain) with the motor protein KIF17; the interaction is direct and is required for association of KIF17 with the cargo that is to be transported. Both isoform 1 and isoform 2 bind to the cytoplasmic domain of amyloid protein (APP). Interacts (via PDZ 1 and 2 domains) with FSPB. Isoform 2, but not isoform 1, interacts (via its truncated PID domain) with active, GTP-bound RAB6A and RAB6B. In terms of tissue distribution, brain and spinal cord. Isoform 2 is expressed in testis and brain, but not detected in lung, liver or spleen.

It localises to the cytoplasm. The protein resides in the perinuclear region. Its subcellular location is the nucleus. It is found in the golgi apparatus. Functionally, putative function in synaptic vesicle exocytosis by binding to Munc18-1, an essential component of the synaptic vesicle exocytotic machinery. May modulate processing of the amyloid-beta precursor protein (APP) and hence formation of APP-beta. Component of the LIN-10-LIN-2-LIN-7 complex, which associates with the motor protein KIF17 to transport vesicles containing N-methyl-D-aspartate (NMDA) receptor subunit NR2B along microtubules. This Homo sapiens (Human) protein is Amyloid-beta A4 precursor protein-binding family A member 1 (APBA1).